A 109-amino-acid chain; its full sequence is Stress-response A/B barrel domain-containing protein HS1 (109 aa).

One can recognise a Stress-response A/B barrel domain in the interval 8–102; that stretch reads VKHVLLASFK…SLDKVLVIDY (95 aa). Valine 36, isoleucine 39, glutamate 40, and methionine 42 together coordinate Mg(2+).

Homodimer. Requires Mg(2+) as cofactor.

Its function is as follows. Heat stable protein involved in defense against fungal pathogens. Possesses antifungal activity against diverse pathogenic fungi. Possesses antimicrobial activity. Possesses ribonuclease activity. The protein is Stress-response A/B barrel domain-containing protein HS1 of Arabidopsis thaliana (Mouse-ear cress).